The chain runs to 1341 residues: Restriction of telomere capping protein 1 (1341 aa).

Residues Met1 to Ser39 form a disordered region. 6 WD repeats span residues Asn207–Asn248, Glu256–Ser296, Thr305–Ala342, Ala367–Glu406, Asn439–His486, and Leu489–Glu527. 5 disordered regions span residues Pro559–Ile593, Thr600–Phe619, Ala630–Glu651, Lys736–Asp765, and Asn789–Arg830. Positions Ala630–Thr644 are enriched in low complexity. A compositionally biased stretch (acidic residues) spans Asp753–Asp765. Low complexity predominate over residues Ser814–Arg823. The WD 7 repeat unit spans residues Lys843–Asp883. 2 disordered regions span residues Ala941–Glu962 and Asp1013–Pro1043. 2 stretches are compositionally biased toward basic and acidic residues: residues Asp951–Glu962 and His1015–Pro1027. Phosphoserine is present on residues Ser1036, Ser1080, Ser1087, Ser1089, Ser1123, and Ser1133. WD repeat units lie at residues Ser1129 to Tyr1169 and Leu1216 to Asn1255. An RING-type; degenerate zinc finger spans residues Cys1293–Cys1335.

Belongs to the WD repeat RTC1 family. Component of the SEA complex composed of at least IML1/SEA1, RTC1/SEA2, MTC5/SEA3, NPR2, NPR3, SEA4, SEC13 and SEH1. Interacts with ribosomes.

The protein resides in the vacuole membrane. Component of the SEA complex which coats the vacuolar membrane and is involved in intracellular trafficking, autophagy, response to nitrogen starvation, and amino acid biogenesis. May be involved in a process influencing telomere capping. This Saccharomyces cerevisiae (strain ATCC 204508 / S288c) (Baker's yeast) protein is Restriction of telomere capping protein 1 (RTC1).